The sequence spans 47 residues: Defensin-like protein 2 (47 aa).

4 disulfides stabilise this stretch: Cys-5–Cys-47, Cys-16–Cys-36, Cys-22–Cys-43, and Cys-26–Cys-45.

It belongs to the DEFL family.

Its function is as follows. Fabatins have antibacterial activity against Gram-positive and Gram-negative bacteria. High activity against P.aeruginosa. No activity against S.cerevisiae and C.albicans. In Vicia faba (Broad bean), this protein is Defensin-like protein 2.